The chain runs to 144 residues: Large ribosomal subunit protein uL15 (144 aa).

Residues 1 to 57 (MRFNELQPAKGSRFAGKRLGRGIGSGLGKTSGKGHKGQKARSGGYHKVGFEGGQMPL) are disordered. Residues 21 to 31 (RGIGSGLGKTS) are compositionally biased toward gly residues.

It belongs to the universal ribosomal protein uL15 family. As to quaternary structure, part of the 50S ribosomal subunit.

Its function is as follows. Binds to the 23S rRNA. In Dichelobacter nodosus (strain VCS1703A), this protein is Large ribosomal subunit protein uL15.